The primary structure comprises 124 residues: Mitochondrial import inner membrane translocase subunit TIM16 (124 aa).

The interval 58–109 (EAQQILNISKLSPEEVQNYEHLFKVNDKSVGDSFYLQSKVVRAKERLDEELQ) is J-like. Serine 69 carries the post-translational modification Phosphoserine.

The protein belongs to the TIM16/PAM16 family. In terms of assembly, probable component of the PAM complex at least composed of a mitochondrial HSP70 protein, GRPEL1 or GRPEL2, TIMM44, TIMM16/PAM16 and TIMM14/DNAJC19. Interacts with DNAJC19. Directly interacts with DNAJC15; this interaction counteracts DNAJC15-dependent stimulation of HSPA9 ATPase activity. Associates with the TIM23 complex.

The protein resides in the mitochondrion inner membrane. In terms of biological role, regulates ATP-dependent protein translocation into the mitochondrial matrix. Inhibits DNAJC19 stimulation of HSPA9/Mortalin ATPase activity. The polypeptide is Mitochondrial import inner membrane translocase subunit TIM16 (Magmas-ps1) (Rattus norvegicus (Rat)).